The chain runs to 350 residues: Small ribosomal subunit biogenesis GTPase RsgA (350 aa).

Residues 1–17 (MSKNKLSKGQQRRVNAN) show a composition bias toward polar residues. The tract at residues 1-33 (MSKNKLSKGQQRRVNANHQRRLKTSKEKPDYDD) is disordered. The CP-type G domain occupies 104 to 273 (TSVLTRPDFY…VIDSPGVREF (170 aa)). Residues 160-163 (NKID) and 214-222 (GQSGVGKSS) each bind GTP. Positions 297, 302, 304, and 310 each coordinate Zn(2+).

The protein belongs to the TRAFAC class YlqF/YawG GTPase family. RsgA subfamily. Monomer. Associates with 30S ribosomal subunit, binds 16S rRNA. Zn(2+) is required as a cofactor.

The protein localises to the cytoplasm. One of several proteins that assist in the late maturation steps of the functional core of the 30S ribosomal subunit. Helps release RbfA from mature subunits. May play a role in the assembly of ribosomal proteins into the subunit. Circularly permuted GTPase that catalyzes slow GTP hydrolysis, GTPase activity is stimulated by the 30S ribosomal subunit. This chain is Small ribosomal subunit biogenesis GTPase RsgA, found in Escherichia coli O6:H1 (strain CFT073 / ATCC 700928 / UPEC).